Reading from the N-terminus, the 398-residue chain is Beta-1,6-galactosyltransferase GALT29A (398 aa).

Residues 1-6 (MKRSVR) lie on the Cytoplasmic side of the membrane. Residues 7-27 (PLFSALLFAFFAATLICRVAI) form a helical; Signal-anchor for type II membrane protein membrane-spanning segment. Topologically, residues 28–398 (RRSSFSFASA…FKIPLVQVYH (371 aa)) are lumenal. Asn-221 and Asn-346 each carry an N-linked (GlcNAc...) asparagine glycan.

Belongs to the glycosyltransferase 29 family. Interacts with GALT31A.

It is found in the golgi apparatus membrane. Functionally, galactosyltransferase involved in the biosynthesis of type II arabinogalactan. Possesses galactosyltransferase (GalT) activity in vitro, transferring galactose from UDP-galactose to a mixture of various oligosaccharides derived from arabinogalactan proteins. Forms a complex with GALT31A that can work cooperatively to enhance the activities of adding galactose residues at O6 positions to beta-1,6-galactan and beta-1,3-galactan. In Arabidopsis thaliana (Mouse-ear cress), this protein is Beta-1,6-galactosyltransferase GALT29A.